The primary structure comprises 563 residues: Probable ganciclovir kinase (563 aa).

The segment covering 1–16 (MDNGVETPQGQKTQPI) has biased composition (polar residues). Positions 1–33 (MDNGVETPQGQKTQPINLPPDRKRLRKHDGLGK) are disordered. Residues 202–210 (LGVGAYGKV) and lysine 219 contribute to the ATP site. The active-site Proton acceptor is the aspartate 314.

This sequence belongs to the protein kinase superfamily. Tyr protein kinase family. HCMV ganciclovir subfamily.

In terms of biological role, phosphorylates the antiviral nucleoside analog ganciclovir. The protein is Probable ganciclovir kinase (U69) of Human herpesvirus 6B (strain Z29) (HHV-6 variant B).